Consider the following 292-residue polypeptide: Protease HtpX (292 aa).

The next 2 membrane-spanning stretches (helical) occupy residues 5 to 25 and 34 to 54; these read IFLFLLTNLAVLMLAGIVMSL and SGLLVMAAIFGFGGSFISLLL. H140 serves as a coordination point for Zn(2+). The active site involves E141. Residue H144 participates in Zn(2+) binding. Transmembrane regions (helical) follow at residues 155–175 and 193–213; these read LLQGVLNTFVIVLARVVGGII and IIVFALEMVFGLFATMIAMWF. Zn(2+) is bound at residue E218.

It belongs to the peptidase M48B family. The cofactor is Zn(2+).

The protein localises to the cell inner membrane. This is Protease HtpX from Xanthomonas axonopodis pv. citri (strain 306).